The sequence spans 470 residues: Nuclear receptor ROR-beta (470 aa).

A DNA-binding region (nuclear receptor) is located at residues 18–93 (VIPCKICGDK…LGMSRDAVKF (76 aa)). 2 NR C4-type zinc fingers span residues 21–41 (CKIC…CEGC) and 57–81 (CPRQ…LQKC). The span at 104-117 (LYAEVQKHQQRLQE) shows a compositional bias: basic and acidic residues. Residues 104-127 (LYAEVQKHQQRLQEQRQQQSGEAE) are disordered. One can recognise an NR LBD domain in the interval 222–460 (EIDRIAQNII…TLFPPLYKEL (239 aa)). An AF-2 motif is present at residues 456 to 461 (LYKELF).

This sequence belongs to the nuclear hormone receptor family. NR1 subfamily. As to quaternary structure, monomer. Interacts with CRX. In terms of tissue distribution, expressed in inner and outer neuroblastic layer as well as in the ganglion cell layer of the developing retina. Expressed in bone marrow osteoprogenitor cells.

The protein localises to the nucleus. It is found in the nucleoplasm. Functionally, nuclear receptor that binds DNA as a monomer to ROR response elements (RORE) containing a single core motif half-site 5'-AGGTCA-3' preceded by a short A-T-rich sequence. Considered to have intrinsic transcriptional activity, have some natural ligands such as all-trans retinoic acid (ATRA) and other retinoids which act as inverse agonists repressing the transcriptional activity. Required for normal postnatal development of rod and cone photoreceptor cells. Modulates rod photoreceptors differentiation at least by inducing the transcription factor NRL-mediated pathway. In cone photoreceptor cells, regulates transcription of OPN1SW. Involved in the regulation of the period length and stability of the circadian rhythm. May control cytoarchitectural patterning of neocortical neurons during development. May act in a dose-dependent manner to regulate barrel formation upon innervation of layer IV neurons by thalamocortical axons. May play a role in the suppression of osteoblastic differentiation through the inhibition of RUNX2 transcriptional activity. Its function is as follows. Isoform 1 is critical for hindlimb motor control and for the differentiation of amacrine and horizontal cells in the retina. Regulates the expression of PTF1A synergistically with FOXN4. This is Nuclear receptor ROR-beta (Rorb) from Mus musculus (Mouse).